A 152-amino-acid polypeptide reads, in one-letter code: UPF0178 protein YPTS_2857 (152 aa).

This sequence belongs to the UPF0178 family.

The chain is UPF0178 protein YPTS_2857 from Yersinia pseudotuberculosis serotype IB (strain PB1/+).